A 701-amino-acid chain; its full sequence is DNA ligase A (701 aa).

The disordered stretch occupies residues M1–R23. NAD(+)-binding positions include D49 to D53, S99 to L100, and E129. Residue K131 is the N6-AMP-lysine intermediate of the active site. Residues R152, E192, K308, and K332 each coordinate NAD(+). Positions 426, 429, 445, and 451 each coordinate Zn(2+). The 87-residue stretch at S615–E701 folds into the BRCT domain.

The protein belongs to the NAD-dependent DNA ligase family. LigA subfamily. Requires Mg(2+) as cofactor. It depends on Mn(2+) as a cofactor.

The catalysed reaction is NAD(+) + (deoxyribonucleotide)n-3'-hydroxyl + 5'-phospho-(deoxyribonucleotide)m = (deoxyribonucleotide)n+m + AMP + beta-nicotinamide D-nucleotide.. Functionally, DNA ligase that catalyzes the formation of phosphodiester linkages between 5'-phosphoryl and 3'-hydroxyl groups in double-stranded DNA using NAD as a coenzyme and as the energy source for the reaction. It is essential for DNA replication and repair of damaged DNA. Probably the only ligase required for non-homologous end joining (NHEJ) repair of 3-overhangs. The sequence is that of DNA ligase A from Mycolicibacterium smegmatis (strain ATCC 700084 / mc(2)155) (Mycobacterium smegmatis).